The primary structure comprises 547 residues: Phospholipase DDHD1 (547 aa).

Residue S184 is part of the active site. Residues 258-533 (LKFKVENFFC…ALFLLTFMYK (276 aa)) enclose the DDHD domain. S370 is modified (phosphoserine). A disordered region spans residues 414–448 (RSSASQPSEPSKDSLEDDKKPSASPSTTTVATQTL). Basic and acidic residues predominate over residues 423-434 (PSKDSLEDDKKP). The segment covering 435 to 448 (SASPSTTTVATQTL) has biased composition (low complexity).

The protein belongs to the PA-PLA1 family. In terms of assembly, forms homooligomers and, to a much smaller extent, heterooligomers with DDHD2. Interacts with SEC23A and SEC24C. Predominantly expressed in testis, in round and elongating spermatids, but not in spermatocytes (at protein level). Also expressed in the brain, and at lower levels in other tissues such as thymus and lung (at protein level).

The protein localises to the cytoplasm. The catalysed reaction is a 1,2-diacyl-sn-glycero-3-phosphate + H2O = a 2-acyl-sn-glycerol 3-phosphate + a fatty acid + H(+). It catalyses the reaction a 1,2-diacyl-sn-glycero-3-phospho-(1D-myo-inositol) + H2O = a 2-acyl-sn-glycero-3-phospho-D-myo-inositol + a fatty acid + H(+). The enzyme catalyses 1-octadecanoyl-2-(5Z,8Z,11Z,14Z-eicosatetraenoyl)-sn-glycero-3-phospho-(1D-myo-inositol) + H2O = 2-(5Z,8Z,11Z,14Z-eicosatetraenoyl)-sn-glycero-3-phospho-(1D-myo-inositol) + octadecanoate + H(+). It carries out the reaction a 1-acyl-2-(5Z,8Z,11Z,14Z-eicosatetraenoyl)-sn-glycero-3-phospho-(1D-myo-inositol) + H2O = 2-(5Z,8Z,11Z,14Z-eicosatetraenoyl)-sn-glycero-3-phospho-(1D-myo-inositol) + a fatty acid + H(+). The catalysed reaction is 1,2-dihexadecanoyl-sn-glycero-3-phospho-(1D-myo-inositol) + H2O = 2-hexadecanoyl-sn-glycero-3-phospho-(1D-myo-inositol) + hexadecanoate + H(+). It catalyses the reaction a 1-acyl-2-(5Z,8Z,11Z,14Z)-eicosatetraenoyl-sn-glycero-3-phosphate + H2O = 2-(5Z,8Z,11Z,14Z-eicosatetraenoyl)-sn-glycero-3-phosphate + a fatty acid + H(+). The enzyme catalyses 1-(9Z-octadecenoyl)-2-(7Z,10Z,13Z,16Z,19Z-docosapentaenoyl)-sn-glycero-3-phospho-1D-myo-inositol + H2O = 2-(7Z,10Z,13Z,16Z,19Z-docosapentaenoyl)-sn-glycero-3-phospho-1D-myo-inositol + (9Z)-octadecenoate + H(+). It carries out the reaction 1-(9Z-octadecenoyl)-2-(5Z,8Z,11Z,14Z-eicosatetraenoyl)-sn-glycero-3-phospho-1D-myo-inositol + H2O = 2-(5Z,8Z,11Z,14Z-eicosatetraenoyl)-sn-glycero-3-phospho-(1D-myo-inositol) + (9Z)-octadecenoate + H(+). The catalysed reaction is 1,2-di-(9Z-octadecenoyl)-sn-glycero-3-phospho-1D-myo-inositol + H2O = 2-(9Z-octadecenoyl)-sn-glycero-3-phospho-1D-myo-inositol + (9Z)-octadecenoate + H(+). It catalyses the reaction 1-(9Z-octadecenoyl)-2-(8Z,11Z,14Z-eicosatrienoyl)-sn-glycero-3-phospho-1D-myo-inositol + H2O = 2-(8Z,11Z,14Z-eicosatrienoyl)-sn-glycero-3-phospho-1D-myo-inositol + (9Z)-octadecenoate + H(+). The enzyme catalyses 1,2-di-(9Z-octadecenoyl)-sn-glycero-3-phosphate + H2O = 2-(9Z-octadecenoyl)-sn-glycero-3-phosphate + (9Z)-octadecenoate + H(+). It carries out the reaction 1-hexadecanoyl-2-(9Z-octadecenoyl)-sn-glycero-3-phosphate + H2O = 2-(9Z-octadecenoyl)-sn-glycero-3-phosphate + hexadecanoate + H(+). The catalysed reaction is 1-hexadecanoyl-2-(9Z-octadecenoyl)-sn-glycero-3-phospho-L-serine + H2O = 2-(9Z-octadecenoyl)-sn-glycero-3-phospho-L-serine + hexadecanoate + H(+). It catalyses the reaction 1,2-di-(5Z,8Z,11Z,14Z)-eicosatetraenoyl-sn-glycero-3-phosphate + H2O = 2-(5Z,8Z,11Z,14Z-eicosatetraenoyl)-sn-glycero-3-phosphate + (5Z,8Z,11Z,14Z)-eicosatetraenoate + H(+). The enzyme catalyses 1-octadecanoyl-2-(5Z,8Z,11Z,14Z-eicosatetraenoyl)-sn-glycero-3-phosphate + H2O = 2-(5Z,8Z,11Z,14Z-eicosatetraenoyl)-sn-glycero-3-phosphate + octadecanoate + H(+). It carries out the reaction a 1,2-diacyl-sn-glycero-3-phospho-L-serine + H2O = a 2-acyl-sn-glycero-3-phospho-L-serine + a fatty acid + H(+). The catalysed reaction is a 1,2-diacyl-sn-glycero-3-phosphocholine + H2O = a 2-acyl-sn-glycero-3-phosphocholine + a fatty acid + H(+). It catalyses the reaction 1,2-di-(9Z-octadecenoyl)-sn-glycero-3-phosphocholine + H2O = (9Z-octadecenoyl)-sn-glycero-3-phosphocholine + (9Z)-octadecenoate + H(+). The enzyme catalyses a 1,2-diacyl-sn-glycero-3-phosphoethanolamine + H2O = a 2-acyl-sn-glycero-3-phosphoethanolamine + a fatty acid + H(+). It carries out the reaction a 1,2-diacyl-sn-glycero-3-phospho-(1'-sn-glycerol) + H2O = 2-acyl-sn-glycero-3-phospho-(1'-sn-glycerol) + a fatty acid + H(+). The catalysed reaction is 1-hexadecanoyl-2-(9Z-octadecenoyl)-sn-glycero-3-phospho-(1'-sn-glycerol) + H2O = 2-(9Z-octadecenoyl)-sn-glycero-3-phospho-(1'-sn-glycerol) + hexadecanoate + H(+). It catalyses the reaction 1-acyl-2-(5Z,8Z,11Z,14Z-eicosatetraenoyl)-sn-glycero-3-phosphocholine + H2O = 2-(5Z,8Z,11Z,14Z)-eicosatetraenoyl-sn-glycero-3-phosphocholine + a fatty acid + H(+). The enzyme catalyses 1-acyl-2-(5Z,8Z,11Z,14Z)-eicosatetraenoyl-sn-glycero-3-phosphoethanolamine + H2O = 2-(5Z,8Z,11Z,14Z)-eicosatetraenoyl-sn-glycero-3-phosphoethanolamine + a fatty acid + H(+). It functions in the pathway phospholipid metabolism; phosphatidylinositol metabolism. Functionally, phospholipase A1 (PLA1) that hydrolyzes ester bonds at the sn-1 position of glycerophospholipids producing a free fatty acid and a lysophospholipid. Prefers phosphatidate (1,2-diacyl-sn-glycero-3-phosphate, PA) as substrate in vitro, but can efficiently hydrolyze phosphatidylinositol (1,2-diacyl-sn-glycero-3-phospho-(1D-myo-inositol), PI), as well as a range of other glycerophospholipid substrates such as phosphatidylcholine (1,2-diacyl-sn-glycero-3-phosphocholine, PC), phosphatidylethanolamine (1,2-diacyl-sn-glycero-3-phosphoethanolamine, PE), phosphatidylserine (1,2-diacyl-sn-glycero-3-phospho-L-serine, PS) and phosphatidylglycerol (1,2-diacyl-sn-glycero-3-phospho-(1'-sn-glycerol), PG). Involved in the regulation of the endogenous content of polyunsaturated PI and PS lipids in the nervous system. Changes in these lipids extend to downstream metabolic products like PI phosphates PIP and PIP2, which play fundamental roles in cell biology. Regulates mitochondrial morphology. These dynamic changes may be due to PA hydrolysis at the mitochondrial surface. May play a regulatory role in spermatogenesis or sperm function. This is Phospholipase DDHD1 from Mus musculus (Mouse).